We begin with the raw amino-acid sequence, 101 residues long: Interleukin-8 (101 aa).

The first 22 residues, 1 to 22 (MPSQLRVAVLAAFLLSAVLCEG), serve as a signal peptide directing secretion. Cystine bridges form between C34–C61 and C36–C77.

It belongs to the intercrine alpha (chemokine CxC) family. Homodimer. Interacts with TNFAIP6 (via Link domain); this interaction interferes with chemokine binding to glycosaminoglycans.

The protein localises to the secreted. Its function is as follows. Chemotactic factor that mediates inflammatory response by attracting neutrophils, basophils, and T-cells to clear pathogens and protect the host from infection. Also plays an important role in neutrophil activation. Released in response to an inflammatory stimulus, exerts its effect by binding to the G-protein-coupled receptors CXCR1 and CXCR2, primarily found in neutrophils, monocytes and endothelial cells. G-protein heterotrimer (alpha, beta, gamma subunits) constitutively binds to CXCR1/CXCR2 receptor and activation by IL8 leads to beta and gamma subunits release from Galpha (GNAI2 in neutrophils) and activation of several downstream signaling pathways including PI3K and MAPK pathways. The protein is Interleukin-8 (CXCL8) of Cavia porcellus (Guinea pig).